A 198-amino-acid polypeptide reads, in one-letter code: Inosine triphosphate pyrophosphatase (198 aa).

The residue at position 2 (A2) is an N-acetylalanine. ITP is bound at residue 14 to 19 (TGNAKK). E44 is a binding site for Mg(2+). ITP-binding positions include K56, 72–73 (DT), and K89. S146 is modified (phosphoserine). ITP is bound by residues 149-152 (FGWD), K172, and 177-178 (HR).

The protein belongs to the HAM1 NTPase family. As to quaternary structure, homodimer. Mg(2+) serves as cofactor. Requires Mn(2+) as cofactor.

It localises to the cytoplasm. The catalysed reaction is ITP + H2O = IMP + diphosphate + H(+). It carries out the reaction dITP + H2O = dIMP + diphosphate + H(+). The enzyme catalyses XTP + H2O = XMP + diphosphate + H(+). It catalyses the reaction N(6)-hydroxy-dATP + H2O = N(6)-hydroxy-dAMP + diphosphate + H(+). Pyrophosphatase that hydrolyzes the non-canonical purine nucleotides inosine triphosphate (ITP), deoxyinosine triphosphate (dITP) as well as 2'-deoxy-N-6-hydroxylaminopurine triphosphate (dHAPTP) and xanthosine 5'-triphosphate (XTP) to their respective monophosphate derivatives. The enzyme does not distinguish between the deoxy- and ribose forms. Probably excludes non-canonical purines from RNA and DNA precursor pools, thus preventing their incorporation into RNA and DNA and avoiding chromosomal lesions. This chain is Inosine triphosphate pyrophosphatase (Itpa), found in Rattus norvegicus (Rat).